The sequence spans 1151 residues: Phospholipid-transporting ATPase NEO1 (1151 aa).

2 disordered regions span residues 1-21 and 73-95; these read MPNP…NNNQ and LDNF…THPL. At 1-184 the chain is on the extracellular side; that stretch reads MPNPPSFKSH…LSNAKYNAVT (184 aa). Residues 12-21 are compositionally biased toward polar residues; that stretch reads QNLFNSNNNQ. The required for endosome-to-Golgi sorting stretch occupies residues 51–104; it reads EPLSKHNTVGDRESFEMRTVDDLDNFSNHSSDSHRKSSNTDTHPLMYDNRLSQD. Position 102 is a phosphoserine (serine 102). The chain crosses the membrane as a helical span at residues 185-205; sequence FVPTLLYEQFKFFYNLYFLVV. Over 206-209 the chain is Cytoplasmic; sequence ALSQ. Residues 210-230 traverse the membrane as a helical segment; it reads AVPALRIGYLSSYIVPLAFVL. Over 231 to 367 the chain is Extracellular; it reads TVTMAKEAID…TSNPLSVDNT (137 aa). The chain crosses the membrane as a helical span at residues 368–388; sequence LWANTVLASSGFCIACVVYTG. Over 389–416 the chain is Cytoplasmic; sequence RDTRQAMNTTTAKVKTGLLELEINSISK. The chain crosses the membrane as a helical span at residues 417–437; that stretch reads ILCACVFALSILLVAFAGFHN. Aspartate 438 is a topological domain (extracellular). The helical transmembrane segment at 439–459 threads the bilayer; sequence DWYIDILRYLILFSTIIPVSL. The Cytoplasmic segment spans residues 460 to 947; it reads RVNLDLAKSV…KLAQFVMHRG (488 aa). Aspartate 503 (4-aspartylphosphate intermediate) is an active-site residue. Residues aspartate 503, lysine 504, and threonine 505 each contribute to the ATP site. Residue aspartate 503 coordinates Mg(2+). Threonine 505 contacts Mg(2+). The residue at position 551 (serine 551) is a Phosphoserine. 12 residues coordinate ATP: glutamate 597, phenylalanine 640, serine 642, lysine 645, lysine 664, arginine 693, threonine 694, threonine 774, glycine 775, aspartate 776, arginine 856, and lysine 862. Aspartate 882 contributes to the Mg(2+) binding site. ATP is bound by residues asparagine 885 and aspartate 886. Aspartate 886 is a Mg(2+) binding site. The helical transmembrane segment at 948 to 968 threads the bilayer; the sequence is LIIAICQAVYSICSLFEPIAL. Residues 969–970 are Extracellular-facing; sequence YQ. The chain crosses the membrane as a helical span at residues 971–991; that stretch reads GWLMVGYATCYTMAPVFSLTL. Residues 992 to 1020 lie on the Cytoplasmic side of the membrane; the sequence is DHDIEESLTKIYPELYKELTEGKSLSYKT. The helical transmembrane segment at 1021-1041 threads the bilayer; sequence FFVWVLLSLFQGSVIQLFSQA. At 1042-1052 the chain is on the extracellular side; the sequence is FTSLLDTDFTR. A helical transmembrane segment spans residues 1053–1073; it reads MVAISFTALVVNELIMVALEI. The Cytoplasmic portion of the chain corresponds to 1074–1078; it reads YTWNK. The helical transmembrane segment at 1079–1099 threads the bilayer; sequence TMLVTEIATLLFYIVSVPFLG. Residues 1100–1109 lie on the Extracellular side of the membrane; the sequence is DYFDLGYMTT. A helical membrane pass occupies residues 1110–1130; that stretch reads VNYYAGLLVILLISIFPVWTA. Residues 1131 to 1151 are Cytoplasmic-facing; that stretch reads KAIYRRLHPPSYAKVQEFATP. A required for endosomal targeting region spans residues 1131-1151; sequence KAIYRRLHPPSYAKVQEFATP.

This sequence belongs to the cation transport ATPase (P-type) (TC 3.A.3) family. Type IV subfamily. In terms of assembly, interacts with MON2. Interacts with ANY1. Functions without a CDC50/LEM3 family accessory subunit. Requires Mg(2+) as cofactor.

It localises to the endosome membrane. It is found in the golgi apparatus membrane. It carries out the reaction ATP + H2O + phospholipidSide 1 = ADP + phosphate + phospholipidSide 2.. The catalysed reaction is a 1,2-diacyl-sn-glycero-3-phospho-L-serine(out) + ATP + H2O = a 1,2-diacyl-sn-glycero-3-phospho-L-serine(in) + ADP + phosphate + H(+). It catalyses the reaction a 1,2-diacyl-sn-glycero-3-phosphoethanolamine(out) + ATP + H2O = a 1,2-diacyl-sn-glycero-3-phosphoethanolamine(in) + ADP + phosphate + H(+). Functionally, flippase that catalyzes the hydrolysis of ATP coupled to the transport of lysophosphatidylserine, phosphatidylethanolamine, and phosphatidylserine from the lumenal to the cytosolic leaflet of the Golgi apparatus membrane and ensures the maintenance of asymmetric distribution of phospholipids. Does not appear to transport phosphatidylcholine or sphingomyelin. May be involved in recycling from endosomes by driving the formation of SNX3-dependent recycling tubules. Required for COPI retrograde transport from the Golgi to the endoplasmic reticulum, Golgi-endosome trafficking, and Golgi-dependent protein glycosylation. This chain is Phospholipid-transporting ATPase NEO1, found in Saccharomyces cerevisiae (strain ATCC 204508 / S288c) (Baker's yeast).